Consider the following 317-residue polypeptide: Apolipoprotein E (317 aa).

The first 18 residues, 1-18 (MKVLWAALLVTFLAGCQA), serve as a signal peptide directing secretion. 8 consecutive repeat copies span residues 80–101 (ALMD…EQLT), 102–123 (PVAE…ARLG), 124–145 (ADME…AMLG), 146–167 (QSTE…KRLL), 168–189 (RDAD…EGAE), 190–211 (RGVS…VRAA), 212–233 (TVGS…ERLR), and 234–255 (ARME…EQVA). Residues 80–255 (ALMDETMKEL…RLDEVKEQVA (176 aa)) are 8 X 22 AA approximate tandem repeats. Met-143 carries the post-translational modification Methionine sulfoxide. A Phosphoserine modification is found at Ser-147. An LDL and other lipoprotein receptors binding region spans residues 158–168 (HLRKLRKRLLR). 162-165 (LRKR) is a heparin binding site. Positions 210–290 (AATVGSLAGQ…SWFEPLVEDM (81 aa)) are lipid-binding and lipoprotein association. Residue 229-236 (GERLRARM) participates in heparin binding. The homooligomerization stretch occupies residues 266–317 (QQIRLQAEAFQARLKSWFEPLVEDMQRQWAGLVEKVQAAMGTSAAPVPSDNH). The specificity for association with VLDL stretch occupies residues 278–290 (RLKSWFEPLVEDM).

This sequence belongs to the apolipoprotein A1/A4/E family. As to quaternary structure, homotetramer. May interact with ABCA1; functionally associated with ABCA1 in the biogenesis of HDLs. May interact with APP/A4 amyloid-beta peptide; the interaction is extremely stable in vitro but its physiological significance is unclear. May interact with MAPT. May interact with MAP2. In the cerebrospinal fluid, interacts with secreted SORL1. Interacts with PMEL; this allows the loading of PMEL luminal fragment on ILVs to induce fibril nucleation. In terms of processing, APOE exists as multiple glycosylated and sialylated glycoforms within cells and in plasma. The extent of glycosylation and sialylation are tissue and context specific. Glycated in plasma VLDL. Post-translationally, phosphorylated by FAM20C in the extracellular medium.

It is found in the secreted. It localises to the extracellular space. The protein localises to the extracellular matrix. The protein resides in the extracellular vesicle. Its subcellular location is the endosome. It is found in the multivesicular body. Its function is as follows. APOE is an apolipoprotein, a protein associating with lipid particles, that mainly functions in lipoprotein-mediated lipid transport between organs via the plasma and interstitial fluids. APOE is a core component of plasma lipoproteins and is involved in their production, conversion and clearance. Apolipoproteins are amphipathic molecules that interact both with lipids of the lipoprotein particle core and the aqueous environment of the plasma. As such, APOE associates with chylomicrons, chylomicron remnants, very low density lipoproteins (VLDL) and intermediate density lipoproteins (IDL) but shows a preferential binding to high-density lipoproteins (HDL). It also binds a wide range of cellular receptors including the LDL receptor/LDLR, the LDL receptor-related proteins LRP1, LRP2 and LRP8 and the very low-density lipoprotein receptor/VLDLR that mediate the cellular uptake of the APOE-containing lipoprotein particles. Finally, APOE also has a heparin-binding activity and binds heparan-sulfate proteoglycans on the surface of cells, a property that supports the capture and the receptor-mediated uptake of APOE-containing lipoproteins by cells. A main function of APOE is to mediate lipoprotein clearance through the uptake of chylomicrons, VLDLs, and HDLs by hepatocytes. APOE is also involved in the biosynthesis by the liver of VLDLs as well as their uptake by peripheral tissues ensuring the delivery of triglycerides and energy storage in muscle, heart and adipose tissues. By participating in the lipoprotein-mediated distribution of lipids among tissues, APOE plays a critical role in plasma and tissues lipid homeostasis. APOE is also involved in two steps of reverse cholesterol transport, the HDLs-mediated transport of cholesterol from peripheral tissues to the liver, and thereby plays an important role in cholesterol homeostasis. First, it is functionally associated with ABCA1 in the biogenesis of HDLs in tissues. Second, it is enriched in circulating HDLs and mediates their uptake by hepatocytes. APOE also plays an important role in lipid transport in the central nervous system, regulating neuron survival and sprouting. The protein is Apolipoprotein E (APOE) of Pan troglodytes (Chimpanzee).